A 218-amino-acid polypeptide reads, in one-letter code: Phosphoglycolate phosphatase (218 aa).

The active-site Nucleophile is the Asp7. Asp7, Asp9, and Asp167 together coordinate Mg(2+).

The protein belongs to the HAD-like hydrolase superfamily. CbbY/CbbZ/Gph/YieH family. Mg(2+) is required as a cofactor.

It carries out the reaction 2-phosphoglycolate + H2O = glycolate + phosphate. It participates in organic acid metabolism; glycolate biosynthesis; glycolate from 2-phosphoglycolate: step 1/1. Its function is as follows. Specifically catalyzes the dephosphorylation of 2-phosphoglycolate. Is involved in the dissimilation of the intracellular 2-phosphoglycolate formed during the DNA repair of 3'-phosphoglycolate ends, a major class of DNA lesions induced by oxidative stress. The chain is Phosphoglycolate phosphatase from Cereibacter sphaeroides (Rhodobacter sphaeroides).